We begin with the raw amino-acid sequence, 379 residues long: Galactose-1-phosphate uridylyltransferase (379 aa).

Over residues 1–15 (MSQSGADPEQRQQAS) the composition is skewed to polar residues. The tract at residues 1 to 20 (MSQSGADPEQRQQASEADAM) is disordered. Residue Cys75 coordinates Zn(2+). UDP-alpha-D-glucose-binding positions include Ala81, 97 to 98 (ND), and Asn173. Residue His184 coordinates Zn(2+). Residue His186 is the Tele-UMP-histidine intermediate of the active site. Residue Gln188 coordinates UDP-alpha-D-glucose. The Zn(2+) site is built by Glu202, His301, His319, and His321. Residues 334-337 (KFMV) and 339-340 (YE) each bind UDP-alpha-D-glucose.

This sequence belongs to the galactose-1-phosphate uridylyltransferase type 1 family. In terms of assembly, homodimer. It depends on Zn(2+) as a cofactor.

It catalyses the reaction alpha-D-galactose 1-phosphate + UDP-alpha-D-glucose = alpha-D-glucose 1-phosphate + UDP-alpha-D-galactose. The protein operates within carbohydrate metabolism; galactose metabolism. Its function is as follows. Plays an important role in galactose metabolism. This chain is Galactose-1-phosphate uridylyltransferase (Galt), found in Rattus norvegicus (Rat).